A 278-amino-acid chain; its full sequence is Probable endonuclease 4 (278 aa).

Zn(2+) is bound by residues His69, His109, Glu145, Asp179, His182, His214, Asp227, His229, and Glu259.

Belongs to the AP endonuclease 2 family. Requires Zn(2+) as cofactor.

The enzyme catalyses Endonucleolytic cleavage to 5'-phosphooligonucleotide end-products.. Endonuclease IV plays a role in DNA repair. It cleaves phosphodiester bonds at apurinic or apyrimidinic (AP) sites, generating a 3'-hydroxyl group and a 5'-terminal sugar phosphate. The protein is Probable endonuclease 4 of Phocaeicola vulgatus (strain ATCC 8482 / DSM 1447 / JCM 5826 / CCUG 4940 / NBRC 14291 / NCTC 11154) (Bacteroides vulgatus).